The following is an 81-amino-acid chain: Small ribosomal subunit protein bS16 (81 aa).

It belongs to the bacterial ribosomal protein bS16 family.

This chain is Small ribosomal subunit protein bS16, found in Clostridium perfringens (strain ATCC 13124 / DSM 756 / JCM 1290 / NCIMB 6125 / NCTC 8237 / Type A).